We begin with the raw amino-acid sequence, 246 residues long: MGRGKVQLKRIENKINRQVTFSKRRSGLLKKANEISVLCDAEVALIIFSTKGKLYEYATDSCMDKILERYERYSYAEKVLISAESDTQGNWCHEYRKLKAKVETIQKCQKHLMGEDLESLNLKELQQLEQQLENSLKHIRSRKSQLMLESINELQRKEKSLQEENKVLQKELVEKQKVQKQQVQWDQTQPQTSSSSSSFMMREALPTTNISNYPAAAGERIEDVAAGQPQHVRIGLPPWMLSHING.

Residues 1–61 (MGRGKVQLKR…GKLYEYATDS (61 aa)) form the MADS-box domain. One can recognise a K-box domain in the interval 88–178 (QGNWCHEYRK…QKELVEKQKV (91 aa)). The segment at 180-199 (KQQVQWDQTQPQTSSSSSSF) is disordered.

As to quaternary structure, may interact with the K-box of MADS1 and MADS6. As to expression, highly expressed in sterile lemmas, at intermediate levels in stamens, and weakly in lemmas, paleas and carpels.

Its subcellular location is the nucleus. Functionally, probable transcription factor. May be involved in the control of flowering time. The protein is MADS-box transcription factor 14 (MADS14) of Oryza sativa subsp. japonica (Rice).